The chain runs to 296 residues: Phosphoribosylaminoimidazole-succinocarboxamide synthase (296 aa).

It belongs to the SAICAR synthetase family.

It carries out the reaction 5-amino-1-(5-phospho-D-ribosyl)imidazole-4-carboxylate + L-aspartate + ATP = (2S)-2-[5-amino-1-(5-phospho-beta-D-ribosyl)imidazole-4-carboxamido]succinate + ADP + phosphate + 2 H(+). The protein operates within purine metabolism; IMP biosynthesis via de novo pathway; 5-amino-1-(5-phospho-D-ribosyl)imidazole-4-carboxamide from 5-amino-1-(5-phospho-D-ribosyl)imidazole-4-carboxylate: step 1/2. In Thioalkalivibrio sulfidiphilus (strain HL-EbGR7), this protein is Phosphoribosylaminoimidazole-succinocarboxamide synthase.